Consider the following 651-residue polypeptide: tRNA uridine 5-carboxymethylaminomethyl modification enzyme MnmG (651 aa).

11 to 16 (GAGHAG) serves as a coordination point for FAD. Residue 296-310 (GPRYCPSIEDKIVRF) participates in NAD(+) binding.

It belongs to the MnmG family. Homodimer. Heterotetramer of two MnmE and two MnmG subunits. It depends on FAD as a cofactor.

It localises to the cytoplasm. NAD-binding protein involved in the addition of a carboxymethylaminomethyl (cmnm) group at the wobble position (U34) of certain tRNAs, forming tRNA-cmnm(5)s(2)U34. The protein is tRNA uridine 5-carboxymethylaminomethyl modification enzyme MnmG of Chloroflexus aurantiacus (strain ATCC 29366 / DSM 635 / J-10-fl).